The chain runs to 115 residues: Large ribosomal subunit protein bL20 (115 aa).

This sequence belongs to the bacterial ribosomal protein bL20 family.

Binds directly to 23S ribosomal RNA and is necessary for the in vitro assembly process of the 50S ribosomal subunit. It is not involved in the protein synthesizing functions of that subunit. This is Large ribosomal subunit protein bL20 from Parasynechococcus marenigrum (strain WH8102).